A 463-amino-acid chain; its full sequence is MEGCTTRDSTGLGLGERFNQRGNVFLRLVSHVQCAIKFAKNHNLRLVIRNTGHDGSGRSSAPGSFEIHTHHLKHTHYHDDFQPVGAVTTSGPAVTVGAGVILGDLYAEGARQGYTVVGGVCPTVGFVGGFLQGGGVSGKFSHNRGLAVDNVLEIQAVTADGDLVVANDYHNQDLFWALRGGGGGTFAVVTQATVRVFPDVPCVTTQLAVSAPEGLDDHSWMQVLELLLRGLRSFNEERIAGEFHLRPDPLSAILTLHFLNTSDLDSVDRRLAALIDKFRTSEIPHIYSSKSHALEVPRSVEAKLYASHELTSVQMPVLYSLDPSYKVSYLNMGDPNDADFRNVYWGPNYERLLALKQKWDVDALFITRLGKRHDVMNTIPSTGAGADMRSFNRDIYDLLRNHAEDPRLNEVWTAINTVTEWVDWITSNGARMIPSDIAFRFWMLRVYMTHDWGCGLTSSTAEL.

An FAD-binding PCMH-type domain is found at E16–D199.

The protein belongs to the oxygen-dependent FAD-linked oxidoreductase family. FAD serves as cofactor.

It functions in the pathway alkaloid biosynthesis. Functionally, FAD-linked oxidoreductase; part of the gene cluster that mediates the biosynthesis of communesins, a prominent class of indole alkaloids with great potential as pharmaceuticals. Communesins are biosynthesized by the coupling of tryptamine and aurantioclavine, two building blocks derived from L-tryptophan. The L-tryptophan decarboxylase cnsB converts L-tryptophan to tryptamine, whereas the tryptophan dimethylallyltransferase cnsF converts L-tryptophan to 4-dimethylallyl tryptophan which is further transformed to aurantioclavine by the aurantioclavine synthase cnsA, probably aided by the catalase cnsD. The cytochrome P450 monooxygenase cnsC catalyzes the heterodimeric coupling between the two different indole moieties, tryptamine and aurantioclavine, to construct vicinal quaternary stereocenters and yield the heptacyclic communesin scaffold. The O-methyltransferase cnsE then methylates the communesin scaffold to produce communesin K, the simplest characterized communesin that contains the heptacyclic core. The dioxygenase cnsJ converts communesin K into communesin I. Acylation to introduce the hexadienyl group at position N16 of communesin I by the acyltransferase cnsK leads to the production of communesin B. The hexadienyl group is produced by the highly reducing polyketide synthase cnsI, before being hydrolytically removed from cnsI by the serine hydrolase cnsH, converted into hexadienyl-CoA by the CoA ligase cnsG, and then transferred to communesin I by cnsK. Surprisingly, cnsK may also be a promiscuous acyltransferase that can tolerate a range of acyl groups, including acetyl-, propionyl-, and butyryl-CoA, which lead to communesins A, G and H respectively. The roles of the alpha-ketoglutarate-dependent dioxygenases cnsM and cnsP have still to be determined. This chain is Aurantioclavine synthase cnsA, found in Penicillium expansum (Blue mold rot fungus).